Reading from the N-terminus, the 112-residue chain is Small ribosomal subunit protein bS6 (112 aa).

This sequence belongs to the bacterial ribosomal protein bS6 family.

Functionally, binds together with bS18 to 16S ribosomal RNA. The protein is Small ribosomal subunit protein bS6 of Chlamydia abortus (strain DSM 27085 / S26/3) (Chlamydophila abortus).